We begin with the raw amino-acid sequence, 264 residues long: S-adenosylmethionine decarboxylase proenzyme (264 aa).

Serine 112 functions as the Schiff-base intermediate with substrate; via pyruvic acid in the catalytic mechanism. Position 112 is a pyruvic acid (Ser); by autocatalysis (serine 112). Histidine 117 (proton acceptor; for processing activity) is an active-site residue. Cysteine 140 acts as the Proton donor; for catalytic activity in catalysis.

It belongs to the prokaryotic AdoMetDC family. Type 2 subfamily. In terms of assembly, heterooctamer of four alpha and four beta chains arranged as a tetramer of alpha/beta heterodimers. Pyruvate serves as cofactor. Is synthesized initially as an inactive proenzyme. Formation of the active enzyme involves a self-maturation process in which the active site pyruvoyl group is generated from an internal serine residue via an autocatalytic post-translational modification. Two non-identical subunits are generated from the proenzyme in this reaction, and the pyruvate is formed at the N-terminus of the alpha chain, which is derived from the carboxyl end of the proenzyme. The post-translation cleavage follows an unusual pathway, termed non-hydrolytic serinolysis, in which the side chain hydroxyl group of the serine supplies its oxygen atom to form the C-terminus of the beta chain, while the remainder of the serine residue undergoes an oxidative deamination to produce ammonia and the pyruvoyl group blocking the N-terminus of the alpha chain.

The catalysed reaction is S-adenosyl-L-methionine + H(+) = S-adenosyl 3-(methylsulfanyl)propylamine + CO2. It participates in amine and polyamine biosynthesis; S-adenosylmethioninamine biosynthesis; S-adenosylmethioninamine from S-adenosyl-L-methionine: step 1/1. Catalyzes the decarboxylation of S-adenosylmethionine to S-adenosylmethioninamine (dcAdoMet), the propylamine donor required for the synthesis of the polyamines spermine and spermidine from the diamine putrescine. In Cronobacter sakazakii (strain ATCC BAA-894) (Enterobacter sakazakii), this protein is S-adenosylmethionine decarboxylase proenzyme.